A 368-amino-acid chain; its full sequence is Type 2 DNA topoisomerase 6 subunit A (368 aa).

The region spanning 9 to 148 (PDTEEAREQL…FHMRPEESGA (140 aa)) is the Topo IIA-type catalytic domain. The O-(5'-phospho-DNA)-tyrosine intermediate role is filled by Y103. 2 residues coordinate Mg(2+): E201 and D253.

This sequence belongs to the TOP6A family. In terms of assembly, homodimer. Heterotetramer of two Top6A and two Top6B chains. Requires Mg(2+) as cofactor.

The catalysed reaction is ATP-dependent breakage, passage and rejoining of double-stranded DNA.. In terms of biological role, relaxes both positive and negative superturns and exhibits a strong decatenase activity. The sequence is that of Type 2 DNA topoisomerase 6 subunit A from Haloarcula marismortui (strain ATCC 43049 / DSM 3752 / JCM 8966 / VKM B-1809) (Halobacterium marismortui).